A 357-amino-acid polypeptide reads, in one-letter code: Sulfate/thiosulfate import ATP-binding protein CysA (357 aa).

In terms of domain architecture, ABC transporter spans Ile3–Leu237. Gly35–Thr42 provides a ligand contact to ATP.

It belongs to the ABC transporter superfamily. Sulfate/tungstate importer (TC 3.A.1.6) family. As to quaternary structure, the complex is composed of two ATP-binding proteins (CysA), two transmembrane proteins (CysT and CysW) and a solute-binding protein (CysP).

The protein localises to the cell inner membrane. The enzyme catalyses sulfate(out) + ATP + H2O = sulfate(in) + ADP + phosphate + H(+). The catalysed reaction is thiosulfate(out) + ATP + H2O = thiosulfate(in) + ADP + phosphate + H(+). Functionally, part of the ABC transporter complex CysAWTP involved in sulfate/thiosulfate import. Responsible for energy coupling to the transport system. In Neisseria meningitidis serogroup A / serotype 4A (strain DSM 15465 / Z2491), this protein is Sulfate/thiosulfate import ATP-binding protein CysA.